The sequence spans 553 residues: Zinc finger matrin-type protein 1 (553 aa).

A disordered region spans residues 16–36; the sequence is TPSSPAATCSGPMAGGDTSSN. Matrin-type zinc fingers lie at residues 61–91, 125–155, 223–253, and 275–305; these read TFCK…KVRL, KFCG…KMRQ, KYCK…NQAR, and YVCP…KESM. 2 disordered regions span residues 341-402 and 428-553; these read QFRQ…DQRV and HISR…ILGF. A compositionally biased stretch (acidic residues) spans 350–362; it reads DSCDYEEEEEQEP. The span at 431 to 453 shows a compositional bias: low complexity; sequence RSPTSQDSSDNSSGSSSDESSGS. Over residues 456–476 the composition is skewed to basic residues; it reads KDKRRKRKHHRESRLRGSGRI. Residues 477–513 are compositionally biased toward basic and acidic residues; sequence RRGDENSEKRKRKGEDADSGKEDNKHDRGKTSGGDKD.

It is found in the nucleus. The protein is Zinc finger matrin-type protein 1 (zmat1) of Xenopus tropicalis (Western clawed frog).